We begin with the raw amino-acid sequence, 285 residues long: Probable enoyl-CoA hydratase echA12 (285 aa).

The protein belongs to the enoyl-CoA hydratase/isomerase family.

It carries out the reaction a (3S)-3-hydroxyacyl-CoA = a (2E)-enoyl-CoA + H2O. It catalyses the reaction a 4-saturated-(3S)-3-hydroxyacyl-CoA = a (3E)-enoyl-CoA + H2O. Its function is as follows. Could possibly oxidize fatty acids using specific components. The protein is Probable enoyl-CoA hydratase echA12 (echA12) of Mycobacterium bovis (strain ATCC BAA-935 / AF2122/97).